Consider the following 206-residue polypeptide: Transcription antitermination protein NusB (206 aa).

Positions 135–206 (ARGEKTSAQE…ETQPPGVNEV (72 aa)) are disordered. Residues 169 to 180 (ATPATTPVTTTV) are compositionally biased toward low complexity.

The protein belongs to the NusB family.

In terms of biological role, involved in transcription antitermination. Required for transcription of ribosomal RNA (rRNA) genes. Binds specifically to the boxA antiterminator sequence of the ribosomal RNA (rrn) operons. The protein is Transcription antitermination protein NusB of Heliobacterium modesticaldum (strain ATCC 51547 / Ice1).